Here is a 171-residue protein sequence, read N- to C-terminus: Allophycocyanin subunit beta-18 (171 aa).

Residue N72 is modified to N4-methylasparagine. C82 is a (2R,3E)-phycocyanobilin binding site.

It belongs to the phycobiliprotein family. Heterodimer of an alpha and a beta chain. Post-translationally, contains one covalently linked bilin chromophore.

Its subcellular location is the plastid. It is found in the chloroplast thylakoid membrane. In terms of biological role, light-harvesting photosynthetic bile pigment-protein from the phycobiliprotein complex. Allophycocyanin has a maximum absorption at approximately 650 nanometers. The chain is Allophycocyanin subunit beta-18 (apcF) from Aglaothamnion neglectum (Red alga).